The sequence spans 459 residues: ATP synthase subunit beta (459 aa).

148-155 (GGAGVGKT) contacts ATP.

Belongs to the ATPase alpha/beta chains family. As to quaternary structure, F-type ATPases have 2 components, CF(1) - the catalytic core - and CF(0) - the membrane proton channel. CF(1) has five subunits: alpha(3), beta(3), gamma(1), delta(1), epsilon(1). CF(0) has three main subunits: a(1), b(2) and c(9-12). The alpha and beta chains form an alternating ring which encloses part of the gamma chain. CF(1) is attached to CF(0) by a central stalk formed by the gamma and epsilon chains, while a peripheral stalk is formed by the delta and b chains.

It is found in the cell inner membrane. It catalyses the reaction ATP + H2O + 4 H(+)(in) = ADP + phosphate + 5 H(+)(out). Functionally, produces ATP from ADP in the presence of a proton gradient across the membrane. The catalytic sites are hosted primarily by the beta subunits. This Burkholderia mallei (strain NCTC 10229) protein is ATP synthase subunit beta.